The following is a 441-amino-acid chain: MQSRKLYKSLYFQVIVAIICGVLLGHFMPDSGTAMKPLGDGFIKLVKMMITPIIFCTVVVGIAGMEDMKKVGRVGGKALLYFEVVTTLALIIGLVVVNVLKPGAGMNVDPATLDTGAIAKYTAKAGEQSVVDFVLHIIPNSVVGAFAEGEILQVLLFSVLFGFALSMMGQSGKPVVKLVEDISHALFAAIGFIMKLAPIGAFGAMAFTIGKYGVSSLSSLAALMGSFYLTCLLFIGLVLGTITRFCGFSIWKLVRYIKEELLIVLGTSSSESALPRLMAKLEQLGCQKSVVGLVVPTGYSFNLDGTSIYLTMAAIFIAQACGIELTLTQELTIIGVLLLTSKGAAGVTGSGFITLAATLATVPDIPVAGLALILGIDRFMSEARALTNLVGNTVATVVVAKWENALDSDKLAAELHNPTPLAHGLKVEAPHLTREVSRTLS.

8 helical membrane-spanning segments follow: residues 9 to 29 (SLYFQVIVAIICGVLLGHFMP), 45 to 65 (LVKMMITPIIFCTVVVGIAGM), 79 to 99 (LLYFEVVTTLALIIGLVVVNV), 145 to 165 (AFAEGEILQVLLFSVLFGFAL), 187 to 207 (FAAIGFIMKLAPIGAFGAMAF), 220 to 240 (LAALMGSFYLTCLLFIGLVLG), 308 to 328 (IYLTMAAIFIAQACGIELTLT), and 356 to 376 (AATLATVPDIPVAGLALILGI).

The protein belongs to the dicarboxylate/amino acid:cation symporter (DAACS) (TC 2.A.23) family.

The protein resides in the cell inner membrane. Responsible for the transport of dicarboxylates such as succinate, fumarate, and malate from the periplasm across the membrane. The protein is C4-dicarboxylate transport protein of Laribacter hongkongensis (strain HLHK9).